The sequence spans 123 residues: Large ribosomal subunit protein uL18 (123 aa).

This sequence belongs to the universal ribosomal protein uL18 family. As to quaternary structure, part of the 50S ribosomal subunit; part of the 5S rRNA/L5/L18/L25 subcomplex. Contacts the 5S and 23S rRNAs.

In terms of biological role, this is one of the proteins that bind and probably mediate the attachment of the 5S RNA into the large ribosomal subunit, where it forms part of the central protuberance. The sequence is that of Large ribosomal subunit protein uL18 from Wolbachia pipientis subsp. Culex pipiens (strain wPip).